Reading from the N-terminus, the 293-residue chain is MNDYLIKAINASKDLRLLTINGKDLVAEAQKRHDTWSASSAVLGRSLLGTLLLAGAELKGDQELTLRLLGDGPVGAAVVTAKSDLTVKGYVQNNHVALPAREDGHIDVKKAVGKGWLQVTKDLGLKQPYTGEVPIVSGEIAEDLTYYLAKSEQIPSAVGLSVFVNPNDTIGAAGGFLLQALPGASEELLQETEDRIKALPQLSSAFLDGMTPEDLAKKILGDDCKILEKDEVSYHCDCSKEKYAGMLETLKGSQLKEMIDEDHGAELVCNFCGNKYNFTEAELQAILDKKLGK.

Intrachain disulfides connect cysteine 236/cysteine 238 and cysteine 269/cysteine 272.

Belongs to the HSP33 family. In terms of processing, under oxidizing conditions two disulfide bonds are formed involving the reactive cysteines. Under reducing conditions zinc is bound to the reactive cysteines and the protein is inactive.

The protein localises to the cytoplasm. Redox regulated molecular chaperone. Protects both thermally unfolding and oxidatively damaged proteins from irreversible aggregation. Plays an important role in the bacterial defense system toward oxidative stress. This is 33 kDa chaperonin from Lactobacillus delbrueckii subsp. bulgaricus (strain ATCC 11842 / DSM 20081 / BCRC 10696 / JCM 1002 / NBRC 13953 / NCIMB 11778 / NCTC 12712 / WDCM 00102 / Lb 14).